A 160-amino-acid polypeptide reads, in one-letter code: 2-C-methyl-D-erythritol 2,4-cyclodiphosphate synthase (160 aa).

A divalent metal cation contacts are provided by Asp11 and His13. Residues 11–13 and 37–38 each bind 4-CDP-2-C-methyl-D-erythritol 2-phosphate; these read DVH and HS. His45 is a binding site for a divalent metal cation. Residues 59–61, 64–68, 103–109, 135–138, Phe142, and Arg145 contribute to the 4-CDP-2-C-methyl-D-erythritol 2-phosphate site; these read DIG, FPDTD, AQAPKMA, and TTTE.

It belongs to the IspF family. As to quaternary structure, homotrimer. A divalent metal cation serves as cofactor.

It carries out the reaction 4-CDP-2-C-methyl-D-erythritol 2-phosphate = 2-C-methyl-D-erythritol 2,4-cyclic diphosphate + CMP. The protein operates within isoprenoid biosynthesis; isopentenyl diphosphate biosynthesis via DXP pathway; isopentenyl diphosphate from 1-deoxy-D-xylulose 5-phosphate: step 4/6. Functionally, involved in the biosynthesis of isopentenyl diphosphate (IPP) and dimethylallyl diphosphate (DMAPP), two major building blocks of isoprenoid compounds. Catalyzes the conversion of 4-diphosphocytidyl-2-C-methyl-D-erythritol 2-phosphate (CDP-ME2P) to 2-C-methyl-D-erythritol 2,4-cyclodiphosphate (ME-CPP) with a corresponding release of cytidine 5-monophosphate (CMP). This is 2-C-methyl-D-erythritol 2,4-cyclodiphosphate synthase from Thioalkalivibrio sulfidiphilus (strain HL-EbGR7).